A 310-amino-acid polypeptide reads, in one-letter code: Carbamate kinase 1 (310 aa).

Belongs to the carbamate kinase family.

It localises to the cytoplasm. It catalyses the reaction hydrogencarbonate + NH4(+) + ATP = carbamoyl phosphate + ADP + H2O + H(+). It participates in metabolic intermediate metabolism; carbamoyl phosphate degradation; CO(2) and NH(3) from carbamoyl phosphate: step 1/1. The protein is Carbamate kinase 1 (arcC1) of Staphylococcus aureus (strain COL).